Reading from the N-terminus, the 216-residue chain is MOB kinase activator 3C (216 aa).

Residues Cys-82, Cys-87, His-164, and His-169 each coordinate Zn(2+).

This sequence belongs to the MOB1/phocein family.

Functionally, may regulate the activity of kinases. In Homo sapiens (Human), this protein is MOB kinase activator 3C (MOB3C).